The primary structure comprises 431 residues: Enolase (431 aa).

Gln166 contacts (2R)-2-phosphoglycerate. Glu208 serves as the catalytic Proton donor. Mg(2+)-binding residues include Asp245, Glu288, and Asp315. 4 residues coordinate (2R)-2-phosphoglycerate: Lys340, Arg369, Ser370, and Lys391. Lys340 (proton acceptor) is an active-site residue.

Belongs to the enolase family. Mg(2+) serves as cofactor.

Its subcellular location is the cytoplasm. The protein localises to the secreted. It is found in the cell surface. It catalyses the reaction (2R)-2-phosphoglycerate = phosphoenolpyruvate + H2O. The protein operates within carbohydrate degradation; glycolysis; pyruvate from D-glyceraldehyde 3-phosphate: step 4/5. Catalyzes the reversible conversion of 2-phosphoglycerate (2-PG) into phosphoenolpyruvate (PEP). It is essential for the degradation of carbohydrates via glycolysis. This chain is Enolase, found in Clostridium botulinum (strain Okra / Type B1).